A 1331-amino-acid polypeptide reads, in one-letter code: Sodium-dependent transporter bedraggled (1331 aa).

A disordered region spans residues 1–62; that stretch reads MSSKEQQAAG…QLEHEQFGLS (62 aa). The span at 16 to 25 shows a compositional bias: polar residues; the sequence is NSNAYSSLPP. A compositionally biased stretch (gly residues) spans 28–43; it reads TGAGCSGAALGSGTGT. An N-linked (GlcNAc...) asparagine glycan is attached at Asn-168. Disordered regions lie at residues 221–284 and 363–473; these read EPRT…TEPV and QTNA…SASS. A compositionally biased stretch (polar residues) spans 258–282; that stretch reads KTFSCSLRPTSQIASSSGSLETSTE. Residues 369–383 are compositionally biased toward basic and acidic residues; that stretch reads SSEEPRPRQYGRRLE. Over residues 413–436 the composition is skewed to polar residues; that stretch reads LQDTPTHPIMSTCSELSSARSSRM. The span at 437–453 shows a compositional bias: low complexity; the sequence is PSPVSLPSDSSSSGSSS. The segment covering 463 to 473 has biased composition (polar residues); the sequence is VQTTTMCSASS. The next 3 membrane-spanning stretches (helical) occupy residues 505–525, 531–551, and 567–587; these read LALI…VLTI, FLLQ…WLQM, and ISPI…FLAL. Asn-627 and Asn-631 each carry an N-linked (GlcNAc...) asparagine glycan. The next 4 membrane-spanning stretches (helical) occupy residues 667 to 687, 696 to 716, 741 to 761, and 778 to 798; these read QLAF…CKGL, IIYT…VYVV, TAAT…VIAI, and AILL…LALC. N-linked (GlcNAc...) asparagine glycosylation occurs at Asn-857. The helical transmembrane segment at 890-910 threads the bilayer; it reads WVWAAVAFATFAGFGLAQLCV. Asn-921 carries N-linked (GlcNAc...) asparagine glycosylation. 4 helical membrane-spanning segments follow: residues 926–946, 956–976, 998–1018, and 1044–1064; these read VLLS…EMGI, LGGS…VFLI, AFLA…LSVV, and MGSL…IIQI. Disordered regions lie at residues 1086 to 1136, 1169 to 1238, and 1256 to 1275; these read PEEG…SYTT, SLDA…ASTL, and VRHR…TLPR. Polar residues-rich tracts occupy residues 1097–1115 and 1186–1196; these read ARQT…TTEG and ILTNPAGSSFN. Residues 1197–1209 are compositionally biased toward low complexity; the sequence is ADPSPASSSSPES.

This sequence belongs to the sodium:neurotransmitter symporter (SNF) (TC 2.A.22) family.

It localises to the membrane. In terms of biological role, putative sodium-dependent transporter which is required for viability, early imaginal disk development and adult motor coordination. Also has a role in the fate commitment of the R3/R4 photoreceptor cells. May function in ommatidial polarity by regulating the activity of the core polarity genes, acting upstream of (or in parallel to) Vang, dsh, pk, stan, and dgo, but downstream or independently of fz. The chain is Sodium-dependent transporter bedraggled from Drosophila melanogaster (Fruit fly).